Consider the following 428-residue polypeptide: Histidine--tRNA ligase (428 aa).

It belongs to the class-II aminoacyl-tRNA synthetase family. Homodimer.

It localises to the cytoplasm. The catalysed reaction is tRNA(His) + L-histidine + ATP = L-histidyl-tRNA(His) + AMP + diphosphate + H(+). In Azotobacter vinelandii (strain DJ / ATCC BAA-1303), this protein is Histidine--tRNA ligase.